A 385-amino-acid polypeptide reads, in one-letter code: Queuine tRNA-ribosyltransferase (385 aa).

D93 (proton acceptor) is an active-site residue. Residues D93–F97, D147, Q191, and G218 each bind substrate. An RNA binding region spans residues G249–D255. D268 (nucleophile) is an active-site residue. The interval T273 to R277 is RNA binding; important for wobble base 34 recognition. Zn(2+) contacts are provided by C306, C308, C311, and H337.

The protein belongs to the queuine tRNA-ribosyltransferase family. In terms of assembly, homodimer. Within each dimer, one monomer is responsible for RNA recognition and catalysis, while the other monomer binds to the replacement base PreQ1. Zn(2+) serves as cofactor.

It carries out the reaction 7-aminomethyl-7-carbaguanine + guanosine(34) in tRNA = 7-aminomethyl-7-carbaguanosine(34) in tRNA + guanine. The protein operates within tRNA modification; tRNA-queuosine biosynthesis. Catalyzes the base-exchange of a guanine (G) residue with the queuine precursor 7-aminomethyl-7-deazaguanine (PreQ1) at position 34 (anticodon wobble position) in tRNAs with GU(N) anticodons (tRNA-Asp, -Asn, -His and -Tyr). Catalysis occurs through a double-displacement mechanism. The nucleophile active site attacks the C1' of nucleotide 34 to detach the guanine base from the RNA, forming a covalent enzyme-RNA intermediate. The proton acceptor active site deprotonates the incoming PreQ1, allowing a nucleophilic attack on the C1' of the ribose to form the product. After dissociation, two additional enzymatic reactions on the tRNA convert PreQ1 to queuine (Q), resulting in the hypermodified nucleoside queuosine (7-(((4,5-cis-dihydroxy-2-cyclopenten-1-yl)amino)methyl)-7-deazaguanosine). The sequence is that of Queuine tRNA-ribosyltransferase from Pasteurella multocida (strain Pm70).